Here is a 190-residue protein sequence, read N- to C-terminus: Adenylate kinase (190 aa).

12–17 (GSGKTT) contacts ATP. An NMP region spans residues 34–63 (STGELLRAEVASGSERGKIIEGFTSKGNLV). AMP is bound by residues Thr35, Arg40, 61–63 (NLV), 88–91 (GYPR), and Gln95. Residues 130–136 (GRARGAD) are LID. Arg131 is a binding site for ATP. 2 residues coordinate AMP: Arg133 and Arg145. Arg173 lines the ATP pocket.

This sequence belongs to the adenylate kinase family. Monomer.

Its subcellular location is the cytoplasm. It catalyses the reaction AMP + ATP = 2 ADP. Its pathway is purine metabolism; AMP biosynthesis via salvage pathway; AMP from ADP: step 1/1. Catalyzes the reversible transfer of the terminal phosphate group between ATP and AMP. Plays an important role in cellular energy homeostasis and in adenine nucleotide metabolism. The sequence is that of Adenylate kinase from Wolinella succinogenes (strain ATCC 29543 / DSM 1740 / CCUG 13145 / JCM 31913 / LMG 7466 / NCTC 11488 / FDC 602W) (Vibrio succinogenes).